Consider the following 1699-residue polypeptide: Eukaryotic translation initiation factor 2-alpha kinase gcn-2 (1699 aa).

In terms of domain architecture, RWD spans 22-138 (EEKLALDAVY…HRVREFLTDH (117 aa)). 2 consecutive Protein kinase domains span residues 108–507 (LTIL…DVVL) and 508–999 (VRNK…DEDL). Residues 114 to 122 (MADTWEGCV), Lys-154, 497 to 505 (LGRGGFGDV), and Lys-520 each bind ATP. 2 disordered regions span residues 572–615 (DSSL…SLMP) and 632–725 (KEWS…SVFE). Positions 669–706 (SSDDEDDDDSSEIDWDAESEEVEDEESDDSDEEDEDDG) are enriched in acidic residues. Polar residues predominate over residues 711-720 (QLNTETSTGA). The Proton acceptor role is filled by Asp-829.

The protein belongs to the protein kinase superfamily. Ser/Thr protein kinase family. GCN2 subfamily.

The enzyme catalyses L-seryl-[protein] + ATP = O-phospho-L-seryl-[protein] + ADP + H(+). It catalyses the reaction L-threonyl-[protein] + ATP = O-phospho-L-threonyl-[protein] + ADP + H(+). Its function is as follows. Serine/threonine-protein kinase which phosphorylates the alpha subunit of eukaryotic translation-initiation factor 2 (eIF2alpha), leading to its inactivation and thus to a rapid reduction of translational initiation and repression of global protein synthesis. Involved in the unfolded protein response (UPR) triggered by several stresses including mitochondrial, osmotic and oxidative stresses, amino acid deprivation and UV irradiation, probably by phosphorylating and inhibiting eIF2alpha. In addition, leads to the selective translation/transcription of some mRNA including atf-5, pha-4 and gpdh-1 which are part of the UPR. Required for maintaining lifespan during amino acid starvation. Involved in hypoxia-mediated adaptive protective response. This Caenorhabditis elegans protein is Eukaryotic translation initiation factor 2-alpha kinase gcn-2.